Consider the following 305-residue polypeptide: Methionyl-tRNA formyltransferase (305 aa).

Residue 111-114 coordinates (6S)-5,6,7,8-tetrahydrofolate; sequence SLLP.

Belongs to the Fmt family.

The catalysed reaction is L-methionyl-tRNA(fMet) + (6R)-10-formyltetrahydrofolate = N-formyl-L-methionyl-tRNA(fMet) + (6S)-5,6,7,8-tetrahydrofolate + H(+). Attaches a formyl group to the free amino group of methionyl-tRNA(fMet). The formyl group appears to play a dual role in the initiator identity of N-formylmethionyl-tRNA by promoting its recognition by IF2 and preventing the misappropriation of this tRNA by the elongation apparatus. This chain is Methionyl-tRNA formyltransferase, found in Campylobacter jejuni subsp. jejuni serotype O:23/36 (strain 81-176).